The primary structure comprises 536 residues: Phosphoenolpyruvate carboxykinase (ATP) (536 aa).

3 residues coordinate substrate: Arg61, Tyr195, and Lys201. ATP contacts are provided by residues Lys201, His220, and 236–244 (GLSGTGKTT). Residues Lys201 and His220 each coordinate Mn(2+). Asp257 lines the Mn(2+) pocket. ATP-binding residues include Glu285, Arg322, and Thr447. Arg322 is a substrate binding site.

The protein belongs to the phosphoenolpyruvate carboxykinase (ATP) family. Mn(2+) is required as a cofactor.

The protein localises to the cytoplasm. The catalysed reaction is oxaloacetate + ATP = phosphoenolpyruvate + ADP + CO2. It participates in carbohydrate biosynthesis; gluconeogenesis. Its function is as follows. Involved in the gluconeogenesis. Catalyzes the conversion of oxaloacetate (OAA) to phosphoenolpyruvate (PEP) through direct phosphoryl transfer between the nucleoside triphosphate and OAA. This chain is Phosphoenolpyruvate carboxykinase (ATP), found in Brucella melitensis biotype 1 (strain ATCC 23456 / CCUG 17765 / NCTC 10094 / 16M).